The sequence spans 659 residues: Putative RING finger protein R311 (659 aa).

The segment at 502-540 (CPVCYDDDYIKTKLICGHTVCLTCVLNILPNSKGCPLCM) adopts an RING-type zinc-finger fold.

This is Putative RING finger protein R311 from Acanthamoeba polyphaga (Amoeba).